The following is a 332-amino-acid chain: Phosphate acyltransferase (332 aa).

Belongs to the PlsX family. Homodimer. Probably interacts with PlsY.

The protein localises to the cytoplasm. The enzyme catalyses a fatty acyl-[ACP] + phosphate = an acyl phosphate + holo-[ACP]. The protein operates within lipid metabolism; phospholipid metabolism. In terms of biological role, catalyzes the reversible formation of acyl-phosphate (acyl-PO(4)) from acyl-[acyl-carrier-protein] (acyl-ACP). This enzyme utilizes acyl-ACP as fatty acyl donor, but not acyl-CoA. The chain is Phosphate acyltransferase from Caldanaerobacter subterraneus subsp. tengcongensis (strain DSM 15242 / JCM 11007 / NBRC 100824 / MB4) (Thermoanaerobacter tengcongensis).